The following is a 350-amino-acid chain: S-adenosylmethionine:tRNA ribosyltransferase-isomerase (350 aa).

The protein belongs to the QueA family. In terms of assembly, monomer.

It localises to the cytoplasm. It catalyses the reaction 7-aminomethyl-7-carbaguanosine(34) in tRNA + S-adenosyl-L-methionine = epoxyqueuosine(34) in tRNA + adenine + L-methionine + 2 H(+). It participates in tRNA modification; tRNA-queuosine biosynthesis. Functionally, transfers and isomerizes the ribose moiety from AdoMet to the 7-aminomethyl group of 7-deazaguanine (preQ1-tRNA) to give epoxyqueuosine (oQ-tRNA). This chain is S-adenosylmethionine:tRNA ribosyltransferase-isomerase, found in Parvibaculum lavamentivorans (strain DS-1 / DSM 13023 / NCIMB 13966).